We begin with the raw amino-acid sequence, 654 residues long: DNA ligase (654 aa).

NAD(+) contacts are provided by residues 31–35 (DSEYD), 80–81 (SL), and Glu109. Lys111 serves as the catalytic N6-AMP-lysine intermediate. Residues Arg132, Glu166, Lys280, and Lys304 each coordinate NAD(+). Positions 398, 401, 416, and 421 each coordinate Zn(2+). Residues 579–654 (NIEGILSGKT…IWSEQDLLDL (76 aa)) enclose the BRCT domain.

The protein belongs to the NAD-dependent DNA ligase family. LigA subfamily. It depends on Mg(2+) as a cofactor. Mn(2+) serves as cofactor.

The catalysed reaction is NAD(+) + (deoxyribonucleotide)n-3'-hydroxyl + 5'-phospho-(deoxyribonucleotide)m = (deoxyribonucleotide)n+m + AMP + beta-nicotinamide D-nucleotide.. Functionally, DNA ligase that catalyzes the formation of phosphodiester linkages between 5'-phosphoryl and 3'-hydroxyl groups in double-stranded DNA using NAD as a coenzyme and as the energy source for the reaction. It is essential for DNA replication and repair of damaged DNA. This is DNA ligase from Lactococcus lactis subsp. lactis (strain IL1403) (Streptococcus lactis).